A 156-amino-acid chain; its full sequence is Small ribosomal subunit protein uS7 (156 aa).

Belongs to the universal ribosomal protein uS7 family. As to quaternary structure, part of the 30S ribosomal subunit. Contacts proteins S9 and S11.

One of the primary rRNA binding proteins, it binds directly to 16S rRNA where it nucleates assembly of the head domain of the 30S subunit. Is located at the subunit interface close to the decoding center, probably blocks exit of the E-site tRNA. In Deinococcus geothermalis (strain DSM 11300 / CIP 105573 / AG-3a), this protein is Small ribosomal subunit protein uS7.